The following is a 2000-amino-acid chain: Myosin-14 (2000 aa).

An N-acetylalanine modification is found at A2. T33 is subject to Phosphothreonine. In terms of domain architecture, Myosin N-terminal SH3-like spans 47 to 97 (TARRMVWVPSELHGFEAAALRDEGEEEAEVELAESGRRLRLPRDQIQRMNP). At S56 the chain carries Phosphoserine. A Myosin motor domain is found at 101-804 (SKAEDMAELT…VLAQLEEERD (704 aa)). Position 194–201 (194–201 (GESGAGKT)) interacts with ATP. The actin-binding stretch occupies residues 682-704 (LSRLMATLSNTNPSFVRCIVPNH). Residues 807 to 836 (VTDIIVSFQAAARGYLARRAFQRRQQQQSA) enclose the IQ domain. Residues 866-1951 (LQVTRQDEVL…VTTLRNRLRR (1086 aa)) are a coiled coil. S925 is modified (phosphoserine). The interval 1173-1197 (RGELEDTLDSTNAQQELRSKREQEV) is disordered. Position 1198 is a phosphothreonine (T1198). Phosphoserine is present on residues S1249 and S1280. Disordered regions lie at residues 1260–1311 (ELSS…AELE), 1597–1629 (HERD…RDEE), 1720–1751 (SDRA…TLEE), 1910–1942 (AEEE…NREV), and 1967–2000 (LEEG…ATPQ). Basic and acidic residues predominate over residues 1290 to 1304 (SDSERARSEAAEKLQ). Residues 1720 to 1732 (SDRARRQAQQDRD) show a composition bias toward basic and acidic residues. Residues 1971 to 1980 (VASDEEEAEG) are compositionally biased toward acidic residues. Phosphoserine occurs at positions 1973 and 1985. The segment covering 1981 to 1991 (AEPGSAPGQEP) has biased composition (low complexity). T1998 carries the post-translational modification Phosphothreonine.

The protein belongs to the TRAFAC class myosin-kinesin ATPase superfamily. Myosin family. In terms of assembly, myosin is a hexameric protein that consists of 2 heavy chain subunits (MHC), 2 alkali light chain subunits (MLC) and 2 regulatory light chain subunits (MLC-2). In terms of tissue distribution, highest levels in lung, kidney, brain and colon, very low levels in liver and bladder and no expression in spleen or seminal vesicle (at protein level). Isoform 1 is expressed in liver, kidney and testis with low levels in skeletal muscle and heart. Isoform 1 and isoform 2 are expressed in brain and lung. Isoform 2 is the main isoform expressed in skeletal muscle and heart. Isoform 3 is limited to brain stem, cerebellum and spinal cord.

Cellular myosin that appears to play a role in cytokinesis, cell shape, and specialized functions such as secretion and capping. In Mus musculus (Mouse), this protein is Myosin-14 (Myh14).